Here is an 873-residue protein sequence, read N- to C-terminus: Zinc fingers and homeoboxes protein 1 (873 aa).

The interval 24–63 (LISDLDEGPPVLTPVENTRAESISSDEEVHESVDSDNQQN) is disordered. Thr36 is modified (phosphothreonine). Residues Ser45, Ser47, and Ser48 each carry the phosphoserine modification. C2H2-type zinc fingers lie at residues 70–93 (YECKYCTFQTPDLNMFTFHVDSEH) and 102–125 (YVCVECNFLTKRYDALSEHNLKYH). Residue Lys159 forms a Glycyl lysine isopeptide (Lys-Gly) (interchain with G-Cter in SUMO2) linkage. Residues 198 to 236 (VHHNSVEDVPEEKENEIKPDREETVENPSSSASESNTST) are disordered. Phosphoserine is present on Ser202. The segment covering 212–221 (NEIKPDREET) has biased composition (basic and acidic residues). The span at 223–236 (ENPSSSASESNTST) shows a compositional bias: low complexity. Residues 272–432 (NSNLIPKVLI…QNNVQKSQVP (161 aa)) are required for dimerization. The segment at 272–564 (NSNLIPKVLI…VQPKQSWNPF (293 aa)) is required for interaction with NFYA. Residues 284 to 346 (NSIPTYNAAL…LKHGVSWTPE (63 aa)) constitute a DNA-binding region (homeobox 1). The interval 431 to 454 (VPAAQPTAETKPATAAVPTSQSVK) is disordered. Glycyl lysine isopeptide (Lys-Gly) (interchain with G-Cter in SUMO2) cross-links involve residues Lys441, Lys454, and Lys485. A DNA-binding region (homeobox 2) is located at residues 464-526 (SFGIRAKKTK…YNQRNSKSNQ (63 aa)). 3 disordered regions span residues 544–563 (DETTESPTVGTVQPKQSWNP), 626–668 (KEEK…CKKT), and 732–769 (SSMNGLSSLRKRGRGRPKGRGRGRPRGRPRGSKRINNW). A compositionally biased stretch (polar residues) spans 550–562 (PTVGTVQPKQSWN). Positions 569–630 (PQKFKEKTAE…KSKALKEEKM (62 aa)) form a DNA-binding region, homeobox 3. Lys629 participates in a covalent cross-link: Glycyl lysine isopeptide (Lys-Gly) (interchain with G-Cter in SUMO2). Residue Ser648 is modified to Phosphoserine. Residues 660 to 722 (STGKICKKTP…YAWKNGNLKW (63 aa)) constitute a DNA-binding region (homeobox 4). Residues 734–768 (MNGLSSLRKRGRGRPKGRGRGRPRGRPRGSKRINN) are required for nuclear localization. The segment covering 740-764 (LRKRGRGRPKGRGRGRPRGRPRGSK) has biased composition (basic residues). Residue Ser774 is modified to Phosphoserine. Residues 777–832 (KFKTGTAILKDYYLKHKFLNEQDLDELVNKSHMGYEQVREWFAERQRRSELGIELF) constitute a DNA-binding region (homeobox 5). Residues 829 to 873 (IELFEENEEEDEVIDDQEEDEEETDDSDTWEPPRHVKRKLSKSDD) form a disordered region. Acidic residues predominate over residues 831–857 (LFEENEEEDEVIDDQEEDEEETDDSDT). The segment at 831–873 (LFEENEEEDEVIDDQEEDEEETDDSDTWEPPRHVKRKLSKSDD) is required for repressor activity. A compositionally biased stretch (basic residues) spans 863 to 873 (HVKRKLSKSDD).

The protein belongs to the ZHX family. As to quaternary structure, forms homodimers. Heterodimer (via HD1 domain) with ZHX2 (via HD1 domain). Also forms a heterodimer with ZHX3 which is a prerequisite for repressor activity. Interacts with ATF7IP and NFYA. Interacts (via homeobox domains) with DNMT3B (via PWWP domain).

Its subcellular location is the nucleus. Its function is as follows. Acts as a transcriptional repressor. Increases DNMT3B-mediated repressive transcriptional activity when DNMT3B is tethered to DNA. May link molecule between DNMT3B and other co-repressor proteins. The sequence is that of Zinc fingers and homeoboxes protein 1 (ZHX1) from Pongo pygmaeus (Bornean orangutan).